The chain runs to 353 residues: Photosystem II D2 protein (353 aa).

Thr2 bears the N-acetylthreonine mark. Thr2 carries the post-translational modification Phosphothreonine. A helical transmembrane segment spans residues 41 to 61; sequence CAYFALGGWLTGTTFVTSWYT. His118 serves as a coordination point for chlorophyll a. A helical transmembrane segment spans residues 125–141; sequence GFMLRQFEIARSVGLRP. Pheophytin a-binding residues include Gln130 and Asn143. Residues 153–166 traverse the membrane as a helical segment; it reads VFVSVFLIYPLGQS. Residue His198 participates in chlorophyll a binding. Residues 208–228 traverse the membrane as a helical segment; sequence AALLCAIHGATVENTIFEDGD. Residues His215 and Phe262 each contribute to the a plastoquinone site. His215 contributes to the Fe cation binding site. His269 provides a ligand contact to Fe cation. The helical transmembrane segment at 279 to 295 threads the bilayer; sequence GLWMSAIGVVGLALNLR.

Belongs to the reaction center PufL/M/PsbA/D family. As to quaternary structure, PSII is composed of 1 copy each of membrane proteins PsbA, PsbB, PsbC, PsbD, PsbE, PsbF, PsbH, PsbI, PsbJ, PsbK, PsbL, PsbM, PsbT, PsbX, PsbY, PsbZ, Psb30/Ycf12, at least 3 peripheral proteins of the oxygen-evolving complex and a large number of cofactors. It forms dimeric complexes. It depends on The D1/D2 heterodimer binds P680, chlorophylls that are the primary electron donor of PSII, and subsequent electron acceptors. It shares a non-heme iron and each subunit binds pheophytin, quinone, additional chlorophylls, carotenoids and lipids. There is also a Cl(-1) ion associated with D1 and D2, which is required for oxygen evolution. The PSII complex binds additional chlorophylls, carotenoids and specific lipids. as a cofactor.

Its subcellular location is the plastid. It localises to the chloroplast thylakoid membrane. It catalyses the reaction 2 a plastoquinone + 4 hnu + 2 H2O = 2 a plastoquinol + O2. Photosystem II (PSII) is a light-driven water:plastoquinone oxidoreductase that uses light energy to abstract electrons from H(2)O, generating O(2) and a proton gradient subsequently used for ATP formation. It consists of a core antenna complex that captures photons, and an electron transfer chain that converts photonic excitation into a charge separation. The D1/D2 (PsbA/PsbD) reaction center heterodimer binds P680, the primary electron donor of PSII as well as several subsequent electron acceptors. D2 is needed for assembly of a stable PSII complex. In Staurastrum punctulatum (Green alga), this protein is Photosystem II D2 protein.